The chain runs to 278 residues: UPF0276 protein Swit_4400 (278 aa).

The protein belongs to the UPF0276 family.

This Rhizorhabdus wittichii (strain DSM 6014 / CCUG 31198 / JCM 15750 / NBRC 105917 / EY 4224 / RW1) (Sphingomonas wittichii) protein is UPF0276 protein Swit_4400.